The following is a 776-amino-acid chain: E3 ubiquitin-protein ligase UHRF1 (776 aa).

The region spanning M1–A78 is the Ubiquitin-like domain. The segment at A88 to T126 is disordered. A compositionally biased stretch (polar residues) spans S93 to S102. Residues E103–S113 show a composition bias toward basic and acidic residues. Over residues D114–T126 the composition is skewed to polar residues. 2 tudor-like regions span residues G135–R201 and Q208–P277. The segment at G278–P298 is disordered. Residues P290–E299 form a linker region. Residues G297–D364 form a PHD-type zinc finger. Histone H3R2me0 binding stretches follow at residues C331 to D335 and P351 to D353. One can recognise a YDG domain in the interval G417 to R580. Residues H443–V444 form a required to promote base flipping region. DNA contacts are provided by residues A461 to G462 and D467. 2 required for formation of a 5-methylcytosine-binding pocket regions span residues Y464–D467 and Y476–S479. Positions E617–V660 are disordered. Residue S649 is modified to Phosphoserine; by CDK2. The segment at C706–R745 adopts an RING-type zinc-finger fold.

In terms of processing, phosphorylation at Ser-649 is required for gastrulation. Expressed in proliferating tissues. Highly expressed 24-48 hours after fertilization (hpf) in rapidly proliferating tissues, including the tectum, retina and brachial arches. Preferentially expressed in the liver bud and expression is maintained in the fully developed liver. Also expressed in the proximal gut. In adult, the highest expression is detected in testis.

The protein localises to the nucleus. It localises to the cytoplasm. It catalyses the reaction S-ubiquitinyl-[E2 ubiquitin-conjugating enzyme]-L-cysteine + [acceptor protein]-L-lysine = [E2 ubiquitin-conjugating enzyme]-L-cysteine + N(6)-ubiquitinyl-[acceptor protein]-L-lysine.. Its pathway is protein modification; protein ubiquitination. Multidomain protein that acts as a key epigenetic regulator by bridging DNA methylation and chromatin modification. Specifically recognizes and binds hemimethylated DNA at replication forks via its YDG domain and recruits dnmt1 methyltransferase to ensure faithful propagation of the DNA methylation patterns through DNA replication. In addition to its role in maintenance of DNA methylation, also plays a key role in chromatin modification: through its tudor-like regions and PHD-type zinc fingers, specifically recognizes and binds histone H3 trimethylated at 'Lys-9' (H3K9me3) and unmethylated at 'Arg-2' (H3R2me0), respectively, and recruits chromatin proteins. Enriched in pericentric heterochromatin where it recruits different chromatin modifiers required for this chromatin replication. Also localizes to euchromatic regions where it negatively regulates transcription possibly by impacting DNA methylation and histone modifications. Has E3 ubiquitin-protein ligase activity by mediating the ubiquitination of target proteins. However, it is still unclear how E3 ubiquitin-protein ligase activity is related to its role in chromatin in vivo. Required for pregastrula and lens development. In Danio rerio (Zebrafish), this protein is E3 ubiquitin-protein ligase UHRF1 (uhrf1).